We begin with the raw amino-acid sequence, 327 residues long: Biotin synthase (327 aa).

One can recognise a Radical SAM core domain in the interval 52–279 (NAIQRSTLLS…TSWVRLSAGR (228 aa)). Cysteine 67, cysteine 71, and cysteine 74 together coordinate [4Fe-4S] cluster. [2Fe-2S] cluster is bound by residues cysteine 111, cysteine 142, cysteine 202, and arginine 274.

It belongs to the radical SAM superfamily. Biotin synthase family. Homodimer. Requires [4Fe-4S] cluster as cofactor. It depends on [2Fe-2S] cluster as a cofactor.

It catalyses the reaction (4R,5S)-dethiobiotin + (sulfur carrier)-SH + 2 reduced [2Fe-2S]-[ferredoxin] + 2 S-adenosyl-L-methionine = (sulfur carrier)-H + biotin + 2 5'-deoxyadenosine + 2 L-methionine + 2 oxidized [2Fe-2S]-[ferredoxin]. Its pathway is cofactor biosynthesis; biotin biosynthesis; biotin from 7,8-diaminononanoate: step 2/2. Functionally, catalyzes the conversion of dethiobiotin (DTB) to biotin by the insertion of a sulfur atom into dethiobiotin via a radical-based mechanism. This Dechloromonas aromatica (strain RCB) protein is Biotin synthase.